We begin with the raw amino-acid sequence, 3598 residues long: Dystrophin, isoforms A/C/F/G/H (3598 aa).

The tract at residues 1–230 (MEPGILIDER…YVMCLYHAME (230 aa)) is actin-binding. Calponin-homology (CH) domains are found at residues 12 to 116 (HIQK…LEFN) and 127 to 230 (NGVE…HAME). The interval 233–297 (RTRQQEQEQD…SGELKTHSMR (65 aa)) is disordered. Residues 267–286 (NDQTSLGLYTSDSAGSMEQR) show a composition bias toward polar residues. Spectrin repeat units follow at residues 307–420 (VEIS…KILM), 423–525 (AEFQ…KLQQ), 851–963 (QDFG…AIEN), 1056–1170 (SHID…LLEH), 1173–1275 (TQLG…LLEQ), and 1381–1483 (SYES…TLER). Disordered regions lie at residues 1633–1696 (ARNT…VMPD), 1716–1742 (SLNPQKVTNTPPPKPAKTKRKAPSSPA), 1799–1854 (EDSD…ENTS), 1878–1941 (RDIL…EPLV), and 2204–2233 (GPRISNGKERPDASSAATMSCRSEYNNEPS). Low complexity predominate over residues 1663–1679 (SGESPSSAHTSSSESPT). Residues 1803-1816 (SSVRVDSQGKEMRR) show a composition bias toward basic and acidic residues. Phosphoserine is present on residues serine 1832 and serine 1838. Over residues 1834–1843 (NDEDSAEQEE) the composition is skewed to acidic residues. Residues 1878–1893 (RDILRDSEEEEPKTPD) show a composition bias toward basic and acidic residues. A compositionally biased stretch (polar residues) spans 2218 to 2233 (SAATMSCRSEYNNEPS). Spectrin repeat units follow at residues 2237-2363 (ALAG…QLKN), 2366-2472 (SDSQ…QLHA), 2475-2576 (HSLQ…RLES), 2579-2712 (EHWN…RLDE), and 2715-2819 (TKMR…VLCQ). The segment at 2655-2679 (VSDTSDTEANHDSDSRYMSAEEQSR) is disordered. Residues 2822–2852 (AQQTHENGDDGRTTSNSGTIGPLPNLGQSVK) are disordered. Positions 2849-2882 (QSVKPPWERATTAANVPYYIDHERETTHWDHPEM) constitute a WW domain. Residues 3107-3163 (KHQAKCNICKEYPIVGFRYRCLKCFNFDMCQKCFFFGRNAKNHKLTHPMHEYCTTTT) form a ZZ-type zinc finger. Positions 3112, 3115, 3127, 3130, 3136, 3139, 3149, and 3153 each coordinate Zn(2+). Serine 3207 bears the Phosphoserine mark. 4 disordered regions span residues 3316–3344 (EQSGMPEDSNGMQHSSSSMTGLSGQGEQG), 3387–3449 (DEPN…KGIM), 3483–3545 (LHQQ…QQHL), and 3560–3598 (ELESINDDLEDSSSSNTTNTTTTTTTTATTEKTCVELQK). 2 stretches are compositionally biased toward polar residues: residues 3325 to 3337 (NGMQHSSSSMTGL) and 3408 to 3439 (ALNSKPNTLQTRSVTASQLNTDSPAKMNQQNG). Residues 3485-3499 (QQQQQQLQQQPPQQQ) are compositionally biased toward low complexity. The span at 3505-3523 (GNGGMDISGGMQTSGGYLG) shows a compositional bias: gly residues. Residues 3534-3545 (SSLMQQQHQQHL) are compositionally biased toward low complexity. The segment covering 3560-3570 (ELESINDDLED) has biased composition (acidic residues). The span at 3571 to 3589 (SSSSNTTNTTTTTTTTATT) shows a compositional bias: low complexity.

In terms of assembly, component of the dystrophin associated protein complex (DAPC). Interacts with Dg, via the Dg WW domain binding sites. Isoform A, isoform F and isoform G are expressed in the midgut endoderm of stage 12 embryos. In stage 16 embryos, expression is also seen in the pericardial cells, cells at the ectoderm segmental border and cells along the midline of the CNS. During embryogenesis, isoform A is also expressed in the visceral mesoderm, muscle attachment sites, mesectodermal cells at the midline, the gut, and throughout muscle fibers. In larvae, isoform A is found in all muscle fibers, but not detectable in the brain or neuropil.

It localises to the cell membrane. The protein resides in the sarcolemma. It is found in the cytoplasm. Its subcellular location is the cytoskeleton. Functionally, required for the maintenance of appropriate synaptic retrograde communication and the stabilization of muscle cell architecture or physiology. Both det and Dg are required for maintenance of early dpp signaling in the presumptive crossvein. Isoform A is not required to maintain muscle integrity, but plays a role in neuromuscular homeostasis by regulating neurotransmitter release. May play a role in anchoring the cytoskeleton to the plasma membrane. The chain is Dystrophin, isoforms A/C/F/G/H (Dys) from Drosophila melanogaster (Fruit fly).